Consider the following 322-residue polypeptide: Phosphatidylserine decarboxylase proenzyme (322 aa).

Catalysis depends on charge relay system; for autoendoproteolytic cleavage activity residues aspartate 90, histidine 147, and serine 254. Serine 254 serves as the catalytic Schiff-base intermediate with substrate; via pyruvic acid; for decarboxylase activity. Serine 254 carries the pyruvic acid (Ser); by autocatalysis modification. The disordered stretch occupies residues 292 to 322; the sequence is TPDAEPSPLPAEEIEAEHDASPLVDDKKDQV. Residues 308 to 322 show a composition bias toward basic and acidic residues; it reads EHDASPLVDDKKDQV.

The protein belongs to the phosphatidylserine decarboxylase family. PSD-B subfamily. Prokaryotic type I sub-subfamily. In terms of assembly, heterodimer of a large membrane-associated beta subunit and a small pyruvoyl-containing alpha subunit. It depends on pyruvate as a cofactor. In terms of processing, is synthesized initially as an inactive proenzyme. Formation of the active enzyme involves a self-maturation process in which the active site pyruvoyl group is generated from an internal serine residue via an autocatalytic post-translational modification. Two non-identical subunits are generated from the proenzyme in this reaction, and the pyruvate is formed at the N-terminus of the alpha chain, which is derived from the carboxyl end of the proenzyme. The autoendoproteolytic cleavage occurs by a canonical serine protease mechanism, in which the side chain hydroxyl group of the serine supplies its oxygen atom to form the C-terminus of the beta chain, while the remainder of the serine residue undergoes an oxidative deamination to produce ammonia and the pyruvoyl prosthetic group on the alpha chain. During this reaction, the Ser that is part of the protease active site of the proenzyme becomes the pyruvoyl prosthetic group, which constitutes an essential element of the active site of the mature decarboxylase.

It is found in the cell membrane. It carries out the reaction a 1,2-diacyl-sn-glycero-3-phospho-L-serine + H(+) = a 1,2-diacyl-sn-glycero-3-phosphoethanolamine + CO2. Its pathway is phospholipid metabolism; phosphatidylethanolamine biosynthesis; phosphatidylethanolamine from CDP-diacylglycerol: step 2/2. In terms of biological role, catalyzes the formation of phosphatidylethanolamine (PtdEtn) from phosphatidylserine (PtdSer). The sequence is that of Phosphatidylserine decarboxylase proenzyme from Escherichia coli O7:K1 (strain IAI39 / ExPEC).